We begin with the raw amino-acid sequence, 491 residues long: Probable glycine dehydrogenase (decarboxylating) subunit 2 (491 aa).

Residue lysine 273 is modified to N6-(pyridoxal phosphate)lysine.

Belongs to the GcvP family. C-terminal subunit subfamily. In terms of assembly, the glycine cleavage system is composed of four proteins: P, T, L and H. In this organism, the P 'protein' is a heterodimer of two subunits. The cofactor is pyridoxal 5'-phosphate.

The enzyme catalyses N(6)-[(R)-lipoyl]-L-lysyl-[glycine-cleavage complex H protein] + glycine + H(+) = N(6)-[(R)-S(8)-aminomethyldihydrolipoyl]-L-lysyl-[glycine-cleavage complex H protein] + CO2. Functionally, the glycine cleavage system catalyzes the degradation of glycine. The P protein binds the alpha-amino group of glycine through its pyridoxal phosphate cofactor; CO(2) is released and the remaining methylamine moiety is then transferred to the lipoamide cofactor of the H protein. The chain is Probable glycine dehydrogenase (decarboxylating) subunit 2 from Bacillus cereus (strain G9842).